Consider the following 179-residue polypeptide: Bifunctional protein PyrR (179 aa).

Positions V99–T111 match the PRPP-binding motif.

The protein belongs to the purine/pyrimidine phosphoribosyltransferase family. PyrR subfamily. Homodimer and homohexamer; in equilibrium.

The catalysed reaction is UMP + diphosphate = 5-phospho-alpha-D-ribose 1-diphosphate + uracil. Functionally, regulates transcriptional attenuation of the pyrimidine nucleotide (pyr) operon by binding in a uridine-dependent manner to specific sites on pyr mRNA. This disrupts an antiterminator hairpin in the RNA and favors formation of a downstream transcription terminator, leading to a reduced expression of downstream genes. Also displays a weak uracil phosphoribosyltransferase activity which is not physiologically significant. This chain is Bifunctional protein PyrR, found in Limosilactobacillus fermentum (strain NBRC 3956 / LMG 18251) (Lactobacillus fermentum).